The sequence spans 258 residues: Type III pantothenate kinase (258 aa).

6–13 (DIGNTNTV) contacts ATP. Residues Tyr-100 and 107-110 (GADR) each bind substrate. Residue Asp-109 is the Proton acceptor of the active site. Asp-129 serves as a coordination point for K(+). Thr-132 lines the ATP pocket. Thr-185 contacts substrate.

The protein belongs to the type III pantothenate kinase family. As to quaternary structure, homodimer. NH4(+) is required as a cofactor. Requires K(+) as cofactor.

The protein resides in the cytoplasm. It carries out the reaction (R)-pantothenate + ATP = (R)-4'-phosphopantothenate + ADP + H(+). Its pathway is cofactor biosynthesis; coenzyme A biosynthesis; CoA from (R)-pantothenate: step 1/5. Catalyzes the phosphorylation of pantothenate (Pan), the first step in CoA biosynthesis. The protein is Type III pantothenate kinase of Syntrophobacter fumaroxidans (strain DSM 10017 / MPOB).